Here is a 488-residue protein sequence, read N- to C-terminus: UDP-N-acetylmuramate--L-alanine ligase (488 aa).

Residue 127 to 133 (GTHGKTT) participates in ATP binding.

It belongs to the MurCDEF family.

It is found in the cytoplasm. The enzyme catalyses UDP-N-acetyl-alpha-D-muramate + L-alanine + ATP = UDP-N-acetyl-alpha-D-muramoyl-L-alanine + ADP + phosphate + H(+). Its pathway is cell wall biogenesis; peptidoglycan biosynthesis. In terms of biological role, cell wall formation. The protein is UDP-N-acetylmuramate--L-alanine ligase of Shewanella sp. (strain ANA-3).